Reading from the N-terminus, the 272-residue chain is S-adenosylmethionine decarboxylase proenzyme (272 aa).

The active-site Schiff-base intermediate with substrate; via pyruvic acid is the serine 117. Serine 117 carries the post-translational modification Pyruvic acid (Ser); by autocatalysis. Histidine 122 serves as the catalytic Proton acceptor; for processing activity. Cysteine 145 serves as the catalytic Proton donor; for catalytic activity.

This sequence belongs to the prokaryotic AdoMetDC family. Type 2 subfamily. Heterooctamer of four alpha and four beta chains arranged as a tetramer of alpha/beta heterodimers. The cofactor is pyruvate. Post-translationally, is synthesized initially as an inactive proenzyme. Formation of the active enzyme involves a self-maturation process in which the active site pyruvoyl group is generated from an internal serine residue via an autocatalytic post-translational modification. Two non-identical subunits are generated from the proenzyme in this reaction, and the pyruvate is formed at the N-terminus of the alpha chain, which is derived from the carboxyl end of the proenzyme. The post-translation cleavage follows an unusual pathway, termed non-hydrolytic serinolysis, in which the side chain hydroxyl group of the serine supplies its oxygen atom to form the C-terminus of the beta chain, while the remainder of the serine residue undergoes an oxidative deamination to produce ammonia and the pyruvoyl group blocking the N-terminus of the alpha chain.

The enzyme catalyses S-adenosyl-L-methionine + H(+) = S-adenosyl 3-(methylsulfanyl)propylamine + CO2. Its pathway is amine and polyamine biosynthesis; S-adenosylmethioninamine biosynthesis; S-adenosylmethioninamine from S-adenosyl-L-methionine: step 1/1. Functionally, catalyzes the decarboxylation of S-adenosylmethionine to S-adenosylmethioninamine (dcAdoMet), the propylamine donor required for the synthesis of the polyamines spermine and spermidine from the diamine putrescine. The polypeptide is S-adenosylmethionine decarboxylase proenzyme (Halorhodospira halophila (strain DSM 244 / SL1) (Ectothiorhodospira halophila (strain DSM 244 / SL1))).